A 663-amino-acid polypeptide reads, in one-letter code: Polyunsaturated fatty acid lipoxygenase ALOX15 (663 aa).

The PLAT domain maps to 2-115 (GLYRVRVSTG…ILSLPEGTAR (114 aa)). The Lipoxygenase domain maps to 116-663 (TVVDDPQGLF…PSRVENSVAI (548 aa)). 5 residues coordinate Fe cation: His361, His366, His541, His545, and Ile663.

Belongs to the lipoxygenase family. As to quaternary structure, interacts with PEBP1; in response to IL13/interleukin-13, prevents the interaction of PEBP1 with RAF1 to activate the ERK signaling cascade. Requires Fe cation as cofactor.

The protein resides in the cytoplasm. It is found in the cytosol. Its subcellular location is the cell membrane. It localises to the lipid droplet. The catalysed reaction is (5Z,8Z,11Z,14Z)-eicosatetraenoate + O2 = (12S)-hydroperoxy-(5Z,8Z,10E,14Z)-eicosatetraenoate. It catalyses the reaction (5Z,8Z,11Z,14Z)-eicosatetraenoate + O2 = (15S)-hydroperoxy-(5Z,8Z,11Z,13E)-eicosatetraenoate. It carries out the reaction (9Z,12Z)-octadecadienoate + O2 = (13S)-hydroperoxy-(9Z,11E)-octadecadienoate. The enzyme catalyses (5Z,8Z,11Z,14Z)-eicosatetraenoate + 2 O2 = (14R,15S)-dihydroperoxy-(5Z,8Z,10E,12E)-eicosatetraenoate. The catalysed reaction is (5Z,8Z,11Z,14Z)-eicosatetraenoate + 2 O2 = (8S,15S)-dihydroperoxy-(5Z,9E,11Z,13E)-eicosatetraenoate. It catalyses the reaction (14S,15R)-epoxy-(5Z,8Z,11Z)-eicosatrienoate + O2 = (8S)-hydroperoxy-(14S,15R)-epoxy-(5Z,9E,11Z)-eicosatrienoate. It carries out the reaction (14S,15R)-epoxy-(5Z,8Z,11Z)-eicosatrienoate + O2 = (12S)-hydroperoxy-(14S,15R)-epoxy-(5Z,8Z,10E)-eicosatrienoate. The enzyme catalyses (14R,15S)-epoxy-(5Z,8Z,11Z)-eicosatrienoate + O2 = (5S)-hydroperoxy-(14R,15S)-epoxy-(6E,8Z,11Z)-eicosatrienoate. The catalysed reaction is (14R,15S)-epoxy-(5Z,8Z,11Z)-eicosatrienoate + O2 = (12S)-hydroperoxy-(14R,15S)-epoxy-(5Z,8Z,10E)-eicosatrienoate. It catalyses the reaction (15R)-hydroperoxy-(5Z,8Z,11Z,13E)-eicosatetraenoate = 15-oxo-(5Z,8Z,11Z,13E)-eicosatetraenoate + H2O. It carries out the reaction (15S)-hydroperoxy-(5Z,8Z,11Z,13E)-eicosatetraenoate = (14S,15S)-epoxy-(5Z,8Z,10E,12E)-eicosatetraenoate + H2O. The enzyme catalyses (12S)-hydroperoxy-(5Z,8Z,10E,14Z)-eicosatetraenoate = (8S)-hydroxy-(11S,12S)-epoxy-(5Z,9E,14Z)-eicosatrienoate. The catalysed reaction is (4Z,7Z,10Z,13Z,16Z,19Z)-docosahexaenoate + O2 = 14-hydroperoxy-(4Z,7Z,10Z,12E,16Z,19Z)-docosahexaenoate. It catalyses the reaction (4Z,7Z,10Z,13Z,16Z)-docosapentaenoate + O2 = 14-hydroperoxy-(4Z,7Z,10Z,12E,16Z)-docosapentaenoate. It carries out the reaction (7Z,10Z,13Z,16Z,19Z)-docosapentaenoate + O2 = 14-hydroperoxy-(7Z,10Z,12E,16Z,19Z)-docosapentaenoate. The enzyme catalyses (4Z,7Z,10Z,13Z,16Z,19Z)-docosahexaenoate + O2 = (14S)-hydroperoxy-(4Z,7Z,10Z,12E,16Z,19Z)-docosahexaenoate. The catalysed reaction is (4Z,7Z,10Z,13Z,16Z,19Z)-docosahexaenoate + O2 = (17S)-hydroperoxy-(4Z,7Z,10Z,13Z,15E,19Z)-docosahexaenoate. It catalyses the reaction (7S)-hydroperoxy-(4Z,8E,10Z,13Z,16Z,19Z)-docosahexaenoate + O2 = (7S,14S)-dihydroperoxy-(4Z,8E,10Z,12E,16Z,19Z)-docosahexaenoate. It carries out the reaction (7S)-hydroperoxy-(4Z,8E,10Z,13Z,16Z,19Z)-docosahexaenoate + O2 = (7S,17S)-dihydroperoxy-(4Z,8E,10Z,13Z,15E,19Z)-docosahexaenoate. The enzyme catalyses (4Z,7Z,10Z,13Z,16Z,19Z)-docosahexaenoate + O2 = (11S)-hydroperoxy-(4Z,7Z,9E,13Z,16Z,19Z)-docosahexaenoate. The catalysed reaction is N-(5Z,8Z,11Z,14Z)-eicosatetraenoyl-taurine + O2 = N-(12S)-hydroperoxy-(5Z,8Z,10E,14Z)-eicosatetraenoyl-taurine. It catalyses the reaction N-(5Z,8Z,11Z,14Z)-eicosatetraenoyl-gamma-aminobutanoate + O2 = N-(12S)-hydroperoxy-(5Z,8Z,10E,14Z)-eicosatetraenoyl-gamma-aminobutanoate. It carries out the reaction N-(5Z,8Z,11Z,14Z)-eicosatetraenoyl-glycine + O2 = N-(12S)-hydroperoxy-(5Z,8Z,10E,14Z)-eicosatetraenoyl-glycine. The enzyme catalyses N-(5Z,8Z,11Z,14Z)-eicosatetraenoyl-L-alanine + O2 = N-(12S)-hydroperoxy-(5Z,8Z,10E,14Z)-eicosatetraenoyl-alanine. The catalysed reaction is N-(5Z,8Z,11Z,14Z)-eicosatetraenoyl-taurine + O2 = N-(15S)-hydroperoxy-(5Z,8Z,11Z,13E)-eicosatetraenoyl-taurine. It catalyses the reaction N-(5Z,8Z,11Z,14Z)-eicosatetraenoyl-gamma-aminobutanoate + O2 = N-(15S)-hydroperoxy-(5Z,8Z,11Z,13E)-eicosatetraenoyl-gamma-aminobutanoate. It carries out the reaction N-(5Z,8Z,11Z,14Z)-eicosatetraenoyl-glycine + O2 = N-(15S)-hydroperoxy-(5Z,8Z,11Z,13E)-eicosatetraenoyl-glycine. The enzyme catalyses N-(5Z,8Z,11Z,14Z)-eicosatetraenoyl-L-alanine + O2 = N-(15S)-hydroperoxy-(5Z,8Z,11Z,13E)-eicosatetraenoyl-alanine. It participates in lipid metabolism; hydroperoxy eicosatetraenoic acid biosynthesis. Functionally, non-heme iron-containing dioxygenase that catalyzes the stereo-specific peroxidation of free and esterified polyunsaturated fatty acids generating a spectrum of bioactive lipid mediators. It inserts peroxyl groups at C12 or C15 of arachidonate ((5Z,8Z,11Z,14Z)-eicosatetraenoate) producing both 12-hydroperoxyeicosatetraenoate/12-HPETE and 15-hydroperoxyeicosatetraenoate/15-HPETE. It may then act on 12-HPETE to produce hepoxilins, which may show pro-inflammatory properties. Can also peroxidize linoleate ((9Z,12Z)-octadecadienoate) to 13-hydroperoxyoctadecadienoate. May participate in the sequential oxidations of DHA ((4Z,7Z,10Z,13Z,16Z,19Z)-docosahexaenoate) to generate specialized pro-resolving mediators (SPMs)like resolvin D5 ((7S,17S)-diHPDHA) and (7S,14S)-diHPDHA, that actively down-regulate the immune response and have anti-aggregation properties with platelets. Can convert epoxy fatty acids to hydroperoxy-epoxides derivatives followed by an intramolecular nucleophilic substitution leading to the formation of monocyclic endoperoxides. Plays an important role during the maintenance of self-tolerance by peroxidizing membrane-bound phosphatidylethanolamine which can then signal the sorting process for clearance of apoptotic cells during inflammation and prevent an autoimmune response. In addition to its role in the immune and inflammatory responses, this enzyme may play a role in epithelial wound healing in the cornea through production of lipoxin A4 (LXA(4)) and docosahexaenoic acid-derived neuroprotectin D1 (NPD1; 10R,17S-HDHA), both lipid autacoids exhibit anti-inflammatory and neuroprotective properties. Furthermore, it may regulate actin polymerization which is crucial for several biological processes such as the phagocytosis of apoptotic cells. It is also implicated in the generation of endogenous ligands for peroxisome proliferator activated receptor (PPAR-gamma), hence modulating macrophage development and function. It may also exert a negative effect on skeletal development by regulating bone mass through this pathway. As well as participates in ER stress and downstream inflammation in adipocytes, pancreatic islets, and liver. Finally, it is also involved in the cellular response to IL13/interleukin-13. This is Polyunsaturated fatty acid lipoxygenase ALOX15 from Sus scrofa (Pig).